The sequence spans 239 residues: 3,4-dihydroxyphthalate decarboxylase (239 aa).

E84 functions as the Proton donor/acceptor in the catalytic mechanism. Residues E84, H103, H105, and H171 each contribute to the a divalent metal cation site.

This sequence belongs to the aldolase class II family. Requires a divalent metal cation as cofactor.

The catalysed reaction is 3,4-dihydroxyphthalate + H(+) = 3,4-dihydroxybenzoate + CO2. The protein operates within xenobiotic degradation; phthalate degradation. Catalyzes the decarboxylation of 3,4-dihydroxyphthalate to protocatechuate (3,4-dihydroxybenzoate) during phthalate metabolism. The protein is 3,4-dihydroxyphthalate decarboxylase of Terrabacter sp. (strain DBF63).